The sequence spans 236 residues: Small ribosomal subunit protein uS2c (236 aa).

This sequence belongs to the universal ribosomal protein uS2 family.

It localises to the plastid. The protein resides in the chloroplast. The polypeptide is Small ribosomal subunit protein uS2c (rps2) (Lemna minor (Common duckweed)).